The sequence spans 355 residues: Uroporphyrinogen decarboxylase (355 aa).

Substrate-binding positions include 27 to 31, Asp77, Tyr154, Thr209, and His328; that span reads RQAGR.

It belongs to the uroporphyrinogen decarboxylase family. Homodimer.

Its subcellular location is the cytoplasm. It catalyses the reaction uroporphyrinogen III + 4 H(+) = coproporphyrinogen III + 4 CO2. It participates in porphyrin-containing compound metabolism; protoporphyrin-IX biosynthesis; coproporphyrinogen-III from 5-aminolevulinate: step 4/4. In terms of biological role, catalyzes the decarboxylation of four acetate groups of uroporphyrinogen-III to yield coproporphyrinogen-III. This is Uroporphyrinogen decarboxylase from Vibrio campbellii (strain ATCC BAA-1116).